Reading from the N-terminus, the 262-residue chain is Proliferating cell nuclear antigen (262 aa).

A DNA-binding region spans residues 61–80; sequence RCDRNIAMGVNLNSMSKILK. K164 is covalently cross-linked (Glycyl lysine isopeptide (Lys-Gly) (interchain with G-Cter in ubiquitin)).

Belongs to the PCNA family. In terms of assembly, homotrimer. Forms a complex with activator 1 heteropentamer in the presence of ATP. Component of the replisome complex. In terms of processing, monoubiquitinated by the UBE2B-RAD18 complex on Lys-164. Monoubiquitination at Lys-164 also takes place in undamaged proliferating cells, and is mediated by the DCX(DTL) complex, leading to enhance PCNA-dependent translesion DNA synthesis.

Its subcellular location is the nucleus. This protein is an auxiliary protein of DNA polymerase delta and is involved in the control of eukaryotic DNA replication by increasing the polymerase's processibility during elongation of the leading strand. This is Proliferating cell nuclear antigen (PCNA) from Coturnix japonica (Japanese quail).